We begin with the raw amino-acid sequence, 87 residues long: Omega-lycotoxin-Am1d (87 aa).

An N-terminal signal peptide occupies residues 1-17 (MKLSIFFVLFFIAIAYC). Positions 18 to 40 (QPEFLDDEEDEVEETLPVAEEGR) are excised as a propeptide. 4 disulfide bridges follow: Cys-44–Cys-59, Cys-51–Cys-64, Cys-58–Cys-84, and Cys-66–Cys-82.

It belongs to the neurotoxin omega-lctx family. Expressed by the venom gland.

The protein localises to the secreted. In terms of biological role, modulates Cav2.1/CACNA1A voltage-gated calcium channels (P/Q-type currents) in rat cerebellar Purkinje cells and hippocampal CA1-CA3 neurons. At saturating concentrations (&gt;10 nM) decelerates activation kinetics and slightly increases peak amplitude without affecting deactivation kinetics. In vivo, does not cause death when intravenously injected into mice. In rat models, through its activity on Cav2.1/CACNA1A, has an ameliorative effect on memory defects provoked by hyperstimulation of N-methyl-D-aspartate receptors (NMDARs) in the hippocampus. This chain is Omega-lycotoxin-Am1d, found in Alopecosa marikovskyi (Wolf spider).